A 339-amino-acid chain; its full sequence is Type IV secretion system protein PtlH homolog (339 aa).

This sequence belongs to the GSP E family.

This chain is Type IV secretion system protein PtlH homolog (ptlH), found in Bordetella bronchiseptica (strain ATCC BAA-588 / NCTC 13252 / RB50) (Alcaligenes bronchisepticus).